Here is a 489-residue protein sequence, read N- to C-terminus: Adenosylhomocysteinase (489 aa).

Thr-68, Asp-151, and Glu-213 together coordinate substrate. Residue 214–216 (TTT) coordinates NAD(+). 2 residues coordinate substrate: Lys-243 and Asp-247. NAD(+) is bound by residues Asn-248, 277–282 (GYGDVG), Glu-300, Asn-335, 356–358 (IGH), and Asn-403.

This sequence belongs to the adenosylhomocysteinase family. The cofactor is NAD(+).

Its subcellular location is the cytoplasm. The enzyme catalyses S-adenosyl-L-homocysteine + H2O = L-homocysteine + adenosine. Its pathway is amino-acid biosynthesis; L-homocysteine biosynthesis; L-homocysteine from S-adenosyl-L-homocysteine: step 1/1. May play a key role in the regulation of the intracellular concentration of adenosylhomocysteine. This chain is Adenosylhomocysteinase, found in Mycobacterium sp. (strain JLS).